We begin with the raw amino-acid sequence, 436 residues long: Proline transporter 3 (436 aa).

11 helical membrane passes run 29 to 49 (SWFQAAFVLTTSINSAYVLGY), 52 to 72 (TVMVPLGWIGGVVGLILATAI), 118 to 138 (LFMINCGFIILAGSALKAVYV), 151 to 171 (FIAIAGLICAVFAIGIPHLSA), 172 to 192 (LGIWLAVSTILSLIYIVVAIV), 216 to 236 (LFTITGAAATLVFVFNTGMLP), 254 to 274 (LYFQFTVGVLPMFAVVFIGYW), 296 to 316 (ALANISAILQSVISLHIFASP), 345 to 365 (GGYIAVSTLLSALLPFLGDFM), 366 to 386 (SLTGAVSTFPLTFILANHMYY), and 405 to 425 (VVFFSLMSVAAAIAALRLIAL).

This sequence belongs to the amino acid/polyamine transporter 2 family. Amino acid/auxin permease (AAAP) (TC 2.A.18.3) subfamily. As to expression, expressed in epidermal cells of leaves, sepals and petals.

Its subcellular location is the cell membrane. Its function is as follows. Proline transporter that mediates proline and glycine betaine transport. When expressed in a heterologous system (yeast), imports L-proline, glycine betaine and GABA across the plasma membrane. The polypeptide is Proline transporter 3 (PROT3) (Arabidopsis thaliana (Mouse-ear cress)).